The primary structure comprises 79 residues: Small ribosomal subunit protein bS18 (79 aa).

This sequence belongs to the bacterial ribosomal protein bS18 family. As to quaternary structure, part of the 30S ribosomal subunit. Forms a tight heterodimer with protein bS6.

Functionally, binds as a heterodimer with protein bS6 to the central domain of the 16S rRNA, where it helps stabilize the platform of the 30S subunit. The chain is Small ribosomal subunit protein bS18 from Bradyrhizobium sp. (strain BTAi1 / ATCC BAA-1182).